We begin with the raw amino-acid sequence, 221 residues long: Immediate early response gene 2 protein (221 aa).

Met-1 is subject to N-acetylmethionine. The segment at Thr-54–Asn-156 is disordered. Over residues Arg-64 to Glu-77 the composition is skewed to basic and acidic residues. Residues Ser-125–Val-136 are compositionally biased toward low complexity.

It belongs to the IER family.

It is found in the cytoplasm. The protein resides in the nucleus. In terms of biological role, DNA-binding protein that seems to act as a transcription factor. Involved in the regulation of neuronal differentiation, acts upon JNK-signaling pathway activation and plays a role in neurite outgrowth in hippocampal cells. May mediate with FIBP FGF-signaling in the establishment of laterality in the embryo. Promotes cell motility, seems to stimulate tumor metastasis. This Rattus norvegicus (Rat) protein is Immediate early response gene 2 protein (Ier2).